The following is a 515-amino-acid chain: Fatty acyl-CoA reductase 1 (515 aa).

At 1–465 (MVSIPEYYEG…ARKHLNKLRN (465 aa)) the chain is on the cytoplasmic side. The interval 451 to 507 (SGLPAARKHLNKLRNIRYGFNTILVILIWRIFIARSQMARNIWYFVVSLCYKFLSYF) is necessary and sufficient for PEX19-mediated localization into peroxisome membrane. Residues 466-483 (IRYGFNTILVILIWRIFI) form a helical membrane-spanning segment. The Peroxisomal portion of the chain corresponds to 484–515 (ARSQMARNIWYFVVSLCYKFLSYFRASSTMRY).

This sequence belongs to the fatty acyl-CoA reductase family. Interacts with PEX19; PEX19 mediates the targeting of FAR1 to peroxisomes.

The protein resides in the peroxisome membrane. It catalyses the reaction a long-chain fatty acyl-CoA + 2 NADPH + 2 H(+) = a long-chain primary fatty alcohol + 2 NADP(+) + CoA. It carries out the reaction hexadecanoyl-CoA + 2 NADPH + 2 H(+) = hexadecan-1-ol + 2 NADP(+) + CoA. The enzyme catalyses octadecanoyl-CoA + 2 NADPH + 2 H(+) = octadecan-1-ol + 2 NADP(+) + CoA. The catalysed reaction is (9Z)-octadecenoyl-CoA + 2 NADPH + 2 H(+) = (9Z)-octadecen-1-ol + 2 NADP(+) + CoA. It catalyses the reaction (9Z,12Z)-octadecadienoyl-CoA + 2 NADPH + 2 H(+) = (9Z,12Z)-octadecadien-1-ol + 2 NADP(+) + CoA. It carries out the reaction eicosanoyl-CoA + 2 NADPH + 2 H(+) = eicosan-1-ol + 2 NADP(+) + CoA. The enzyme catalyses 16-methylheptadecanoyl-CoA + 2 NADPH + 2 H(+) = 16-methylheptadecan-1-ol + 2 NADP(+) + CoA. The catalysed reaction is 18-methylnonadecanoyl-CoA + 2 NADPH + 2 H(+) = 18-methylnonadecan-1-ol + 2 NADP(+) + CoA. Catalyzes the reduction of saturated and unsaturated C16 or C18 fatty acyl-CoA to fatty alcohols. It plays an essential role in the production of ether lipids/plasmalogens which synthesis requires fatty alcohols. In parallel, it is also required for wax monoesters production since fatty alcohols also constitute a substrate for their synthesis. Functionally, catalyzes the reduction of saturated and unsaturated C16 or C18 fatty acyl-CoA to fatty alcohols. It plays an essential role in the production of ether lipids/plasmalogens which synthesis requires fatty alcohols. In parallel, it is also required for wax monoesters production since fatty alcohols also constitute a substrate for their synthesis. This chain is Fatty acyl-CoA reductase 1, found in Rattus norvegicus (Rat).